Consider the following 1143-residue polypeptide: DNA polymerase III subunit alpha (1143 aa).

Belongs to the DNA polymerase type-C family. DnaE subfamily. As to quaternary structure, DNA polymerase III contains a core (composed of alpha, epsilon and theta chains) that associates with a tau subunit. This core dimerizes to form the PolIII' complex. PolIII' associates with the gamma complex (composed of gamma, delta, delta', psi and chi chains) and with the beta chain to form the complete DNA polymerase III complex.

Its subcellular location is the cytoplasm. It catalyses the reaction DNA(n) + a 2'-deoxyribonucleoside 5'-triphosphate = DNA(n+1) + diphosphate. DNA polymerase III is a complex, multichain enzyme responsible for most of the replicative synthesis in bacteria. This DNA polymerase also exhibits 3' to 5' exonuclease activity. The alpha chain is the DNA polymerase. The chain is DNA polymerase III subunit alpha (dnaE1) from Caulobacter vibrioides (strain NA1000 / CB15N) (Caulobacter crescentus).